A 208-amino-acid polypeptide reads, in one-letter code: MKIKVQTLDGKAGADIDLNDDVFGLDARADILHRVVAWQLEKRRGPARAARERSDVARTGKKFGRQKGGGTARHGDRRAPIFIGGGKAHGPRARTFGHSLNKKIRTLGLKMALSDKAKGGKLVVIDTLELKDAKTKALAGKLGKLDLGKRALFIDGDAVHESFAMASANLIGVDALPAIGANVYDIVRADTLVLTRAAVEKLEARCNG.

Residues 47-58 (ARAARERSDVAR) show a composition bias toward basic and acidic residues. The tract at residues 47-84 (ARAARERSDVARTGKKFGRQKGGGTARHGDRRAPIFIG) is disordered.

Belongs to the universal ribosomal protein uL4 family. As to quaternary structure, part of the 50S ribosomal subunit.

One of the primary rRNA binding proteins, this protein initially binds near the 5'-end of the 23S rRNA. It is important during the early stages of 50S assembly. It makes multiple contacts with different domains of the 23S rRNA in the assembled 50S subunit and ribosome. Its function is as follows. Forms part of the polypeptide exit tunnel. The sequence is that of Large ribosomal subunit protein uL4 from Sphingopyxis alaskensis (strain DSM 13593 / LMG 18877 / RB2256) (Sphingomonas alaskensis).